The primary structure comprises 279 residues: Acyl-coenzyme A thioesterase MBLAC2 (279 aa).

N-acetylserine is present on serine 2. Zn(2+)-binding residues include histidine 83, histidine 85, aspartate 87, histidine 88, histidine 170, aspartate 189, and histidine 231. Cysteine 254 carries S-palmitoyl cysteine lipidation.

It belongs to the metallo-beta-lactamase superfamily. Glyoxalase II family. It depends on Zn(2+) as a cofactor. Post-translationally, palmitoylated on Cys-254 by ZDHHC20.

It localises to the endoplasmic reticulum membrane. It is found in the cell membrane. The catalysed reaction is hexadecanoyl-CoA + H2O = hexadecanoate + CoA + H(+). It catalyses the reaction dodecanoyl-CoA + H2O = dodecanoate + CoA + H(+). The enzyme catalyses tetradecanoyl-CoA + H2O = tetradecanoate + CoA + H(+). It carries out the reaction octadecanoyl-CoA + H2O = octadecanoate + CoA + H(+). The catalysed reaction is a beta-lactam + H2O = a substituted beta-amino acid. Beta-lactamase activity is inhibited by sulbactam. Its function is as follows. Acyl-CoA thioesterases are a group of enzymes that catalyze the hydrolysis of acyl-CoAs to the free fatty acid and coenzyme A (CoASH), providing the potential to regulate intracellular levels of acyl-CoAs, free fatty acids and CoASH. Has an acyl-CoA thioesterase activity towards the long chain fatty acyl-CoA thioester palmitoyl-CoA (hexadecanoyl-CoA; C16:0-CoA). Displays a substrate preference for fatty acyl-CoAs with chain-lengths C12-C18. Possesses beta-lactamase activity, catalyzing the hydrolysis of penicillin G and nitrocefin. Exhibits no activity towards other beta-lactam antibiotic classes including cephalosporins (cefotaxime) and carbapenems (imipenem). The protein is Acyl-coenzyme A thioesterase MBLAC2 (MBLAC2) of Homo sapiens (Human).